We begin with the raw amino-acid sequence, 200 residues long: Probable GTP-binding protein EngB (200 aa).

The EngB-type G domain occupies glutamate 24 to isoleucine 198. Residues glycine 32–serine 39, glycine 59–methionine 63, aspartate 77–glycine 80, threonine 144–aspartate 147, and phenylalanine 177–alanine 179 contribute to the GTP site. Mg(2+) contacts are provided by serine 39 and threonine 61.

Belongs to the TRAFAC class TrmE-Era-EngA-EngB-Septin-like GTPase superfamily. EngB GTPase family. Mg(2+) serves as cofactor.

Its function is as follows. Necessary for normal cell division and for the maintenance of normal septation. The chain is Probable GTP-binding protein EngB from Nitrosococcus oceani (strain ATCC 19707 / BCRC 17464 / JCM 30415 / NCIMB 11848 / C-107).